Reading from the N-terminus, the 106-residue chain is Phosphoribosyl-ATP pyrophosphatase 1 (106 aa).

This sequence belongs to the PRA-PH family.

It localises to the cytoplasm. It catalyses the reaction 1-(5-phospho-beta-D-ribosyl)-ATP + H2O = 1-(5-phospho-beta-D-ribosyl)-5'-AMP + diphosphate + H(+). It participates in amino-acid biosynthesis; L-histidine biosynthesis; L-histidine from 5-phospho-alpha-D-ribose 1-diphosphate: step 2/9. This chain is Phosphoribosyl-ATP pyrophosphatase 1 (hisE1), found in Bradyrhizobium diazoefficiens (strain JCM 10833 / BCRC 13528 / IAM 13628 / NBRC 14792 / USDA 110).